The primary structure comprises 238 residues: Uridylate kinase (238 aa).

12 to 15 (KLSG) serves as a coordination point for ATP. Gly-54 provides a ligand contact to UMP. The ATP site is built by Gly-55 and Arg-59. Residues Asp-74 and 135-142 (TGNPFFTT) each bind UMP. ATP-binding residues include Thr-162, Tyr-168, and Asp-171.

The protein belongs to the UMP kinase family. Homohexamer.

Its subcellular location is the cytoplasm. It catalyses the reaction UMP + ATP = UDP + ADP. Its pathway is pyrimidine metabolism; CTP biosynthesis via de novo pathway; UDP from UMP (UMPK route): step 1/1. Inhibited by UTP. Functionally, catalyzes the reversible phosphorylation of UMP to UDP. The polypeptide is Uridylate kinase (Bordetella pertussis (strain Tohama I / ATCC BAA-589 / NCTC 13251)).